Consider the following 366-residue polypeptide: Polyamine aminopropyltransferase 2 (366 aa).

Residues 20 to 58 (KDKRSELDSDKFELEQQDKHDIQDKQDKQDEQNKQDKQV) show a composition bias toward basic and acidic residues. Positions 20-61 (KDKRSELDSDKFELEQQDKHDIQDKQDKQDEQNKQDKQVQSE) are disordered. The PABS domain maps to 74–305 (DVWDEISLKE…TDWGFHLATN (232 aa)). Residue Q100 coordinates S-methyl-5'-thioadenosine. Positions 129 and 153 each coordinate spermidine. S-methyl-5'-thioadenosine-binding positions include D173 and 207–208 (DA). The active-site Proton acceptor is D225.

It belongs to the spermidine/spermine synthase family. In terms of assembly, homodimer or homotetramer.

Its subcellular location is the cytoplasm. It carries out the reaction S-adenosyl 3-(methylsulfanyl)propylamine + putrescine = S-methyl-5'-thioadenosine + spermidine + H(+). It functions in the pathway amine and polyamine biosynthesis; spermidine biosynthesis; spermidine from putrescine: step 1/1. Catalyzes the irreversible transfer of a propylamine group from the amino donor S-adenosylmethioninamine (decarboxy-AdoMet) to putrescine (1,4-diaminobutane) to yield spermidine. This Bacillus cereus (strain ATCC 14579 / DSM 31 / CCUG 7414 / JCM 2152 / NBRC 15305 / NCIMB 9373 / NCTC 2599 / NRRL B-3711) protein is Polyamine aminopropyltransferase 2.